A 765-amino-acid polypeptide reads, in one-letter code: DNA ligase (765 aa).

The segment at 1 to 34 (MAGDDEDRAVPAAEGAPPPSALPPVSGLDVKAAE) is disordered. NAD(+) is bound by residues 61–65 (DAEYD), 110–111 (SL), and Glu144. Lys146 acts as the N6-AMP-lysine intermediate in catalysis. NAD(+) is bound by residues Arg167, Glu204, Lys317, and Lys341. Residues Cys446, Cys449, Cys464, and Cys470 each coordinate Zn(2+). In terms of domain architecture, BRCT spans 687-765 (ATDSAIAGKT…EDEWLAIAQG (79 aa)).

The protein belongs to the NAD-dependent DNA ligase family. LigA subfamily. Requires Mg(2+) as cofactor. Mn(2+) is required as a cofactor.

It catalyses the reaction NAD(+) + (deoxyribonucleotide)n-3'-hydroxyl + 5'-phospho-(deoxyribonucleotide)m = (deoxyribonucleotide)n+m + AMP + beta-nicotinamide D-nucleotide.. DNA ligase that catalyzes the formation of phosphodiester linkages between 5'-phosphoryl and 3'-hydroxyl groups in double-stranded DNA using NAD as a coenzyme and as the energy source for the reaction. It is essential for DNA replication and repair of damaged DNA. The chain is DNA ligase from Paracoccus denitrificans (strain Pd 1222).